The primary structure comprises 185 residues: MAEAQYIPRLKVQYLEKFRPELTEKFSYKNLLEVPRLDKIVLNMGVGEAVGDSKKIKSAFEDLQAIAGQKPVITKAKTSIATFKLREGMPIGVKVTLRKDRMYEFLDRLVTVALPRVRDFRGLNAKSFDGRGNYAMGLKEHIVFPEIDYDKVDQIWGMDIIVCTTAKTDDEARELLRKFNFPFTK.

It belongs to the universal ribosomal protein uL5 family. As to quaternary structure, part of the 50S ribosomal subunit; part of the 5S rRNA/L5/L18/L25 subcomplex. Contacts the 5S rRNA and the P site tRNA. Forms a bridge to the 30S subunit in the 70S ribosome.

Its function is as follows. This is one of the proteins that bind and probably mediate the attachment of the 5S RNA into the large ribosomal subunit, where it forms part of the central protuberance. In the 70S ribosome it contacts protein S13 of the 30S subunit (bridge B1b), connecting the 2 subunits; this bridge is implicated in subunit movement. Contacts the P site tRNA; the 5S rRNA and some of its associated proteins might help stabilize positioning of ribosome-bound tRNAs. This is Large ribosomal subunit protein uL5 from Parvibaculum lavamentivorans (strain DS-1 / DSM 13023 / NCIMB 13966).